The sequence spans 207 residues: LexA repressor (207 aa).

Residues 28-48 (RAEIAQKLGFKSANAAEEHLK) constitute a DNA-binding region (H-T-H motif). Active-site for autocatalytic cleavage activity residues include Ser-124 and Lys-161.

Belongs to the peptidase S24 family. As to quaternary structure, homodimer.

The catalysed reaction is Hydrolysis of Ala-|-Gly bond in repressor LexA.. Represses a number of genes involved in the response to DNA damage (SOS response), including recA and lexA. In the presence of single-stranded DNA, RecA interacts with LexA causing an autocatalytic cleavage which disrupts the DNA-binding part of LexA, leading to derepression of the SOS regulon and eventually DNA repair. This Aeromonas hydrophila subsp. hydrophila (strain ATCC 7966 / DSM 30187 / BCRC 13018 / CCUG 14551 / JCM 1027 / KCTC 2358 / NCIMB 9240 / NCTC 8049) protein is LexA repressor.